The chain runs to 312 residues: MARRGKKKGRAVSGWLVLDKPAGLGSTEAVSKVKWLFGAQKAGHAGTLDPLASGMLPIALGEATKTVPYVMEGAKVYRFTVAWGEERSTDDLEGPVTKSCDKVPVEEDIRALLPRYTGLIMQTPPQFSAVKIGGERAYDLAREGEVVEIAAREVEIGRLDLISIPEPKKAVFEVECGKGTYVRSLARDMGRDLGCFGHVADLRRTEVYPFETQQLVPLKDLEGAAADAETESDRFSALDSYLLDTEAALDGLPEIVLGDDAAGRIRLGNPVIVRGRDAPVQAPEAWASLRGRLIAIGMVEAGMFKPKRVFGL.

Catalysis depends on D49, which acts as the Nucleophile.

Belongs to the pseudouridine synthase TruB family. Type 1 subfamily.

It carries out the reaction uridine(55) in tRNA = pseudouridine(55) in tRNA. Responsible for synthesis of pseudouridine from uracil-55 in the psi GC loop of transfer RNAs. The chain is tRNA pseudouridine synthase B from Chelativorans sp. (strain BNC1).